Reading from the N-terminus, the 464-residue chain is MGRDIPDNETWWYNPTMEVHPHWKQFNQVPDAVYYSLGIFIGICGIIGCTGNGIVIYLFTKTKSLQTPANMFIINLAFSDFTFSLVNGFPLMTISCFIKKWVFGMAACKVYGFIGGIFGLMSIMTMSMISIDRYNVIGRPMAASKKMSHRRAFLMIIFVWMWSTLWSIGPIFGWGAYVLEGVLCNCSFDYITRDSATRSNIVCMYIFAFCFPILIIFFCYFNIVMAVSNHEKEMAAMAKRLNAKELRKAQAGASAEMKLAKISIVIVTQFLLSWSPYAVVALLAQFGPIEWVTPYAAQLPVMFAKASAIHNPLIYSVSHPKFREAIAENFPWIITCCQFDEKEVEDDKDAETEIPATEQSGGESADAAQMKEMMAMMQKMQQQQAAYPPQGAYPPQGGYPPQGYPPPPAQGGYPPQGYPPPPQGYPPAQGYPPQGYPPPQGAPPQGAPPQAAPPQGVDNQAYQA.

Residues 1–33 are Extracellular-facing; the sequence is MGRDIPDNETWWYNPTMEVHPHWKQFNQVPDAV. N-linked (GlcNAc...) asparagine glycosylation occurs at asparagine 8. The chain crosses the membrane as a helical span at residues 34–58; that stretch reads YYSLGIFIGICGIIGCTGNGIVIYL. At 59-70 the chain is on the cytoplasmic side; the sequence is FTKTKSLQTPAN. Residues 71-97 traverse the membrane as a helical segment; that stretch reads MFIINLAFSDFTFSLVNGFPLMTISCF. Residues 98 to 109 are Extracellular-facing; the sequence is IKKWVFGMAACK. An intrachain disulfide couples cysteine 108 to cysteine 186. Residues 110 to 131 traverse the membrane as a helical segment; it reads VYGFIGGIFGLMSIMTMSMISI. The 'Ionic lock' involved in activated form stabilization motif lies at 132–134; the sequence is DRY. The Cytoplasmic portion of the chain corresponds to 132–151; that stretch reads DRYNVIGRPMAASKKMSHRR. Residues 152 to 172 form a helical membrane-spanning segment; that stretch reads AFLMIIFVWMWSTLWSIGPIF. The Extracellular portion of the chain corresponds to 173-199; the sequence is GWGAYVLEGVLCNCSFDYITRDSATRS. The helical transmembrane segment at 200-224 threads the bilayer; the sequence is NIVCMYIFAFCFPILIIFFCYFNIV. The Cytoplasmic portion of the chain corresponds to 225 to 261; sequence MAVSNHEKEMAAMAKRLNAKELRKAQAGASAEMKLAK. Residues 262–283 traverse the membrane as a helical segment; sequence ISIVIVTQFLLSWSPYAVVALL. Residues 284 to 293 lie on the Extracellular side of the membrane; sequence AQFGPIEWVT. A helical transmembrane segment spans residues 294–315; the sequence is PYAAQLPVMFAKASAIHNPLIY. Lysine 305 carries the N6-(retinylidene)lysine modification. Over 316–464 the chain is Cytoplasmic; that stretch reads SVSHPKFREA…QGVDNQAYQA (149 aa). S-palmitoyl cysteine attachment occurs at residues cysteine 336 and cysteine 337. The tract at residues 344–464 is disordered; sequence VEDDKDAETE…QGVDNQAYQA (121 aa). Residues 367-401 show a composition bias toward low complexity; sequence AAQMKEMMAMMQKMQQQQAAYPPQGAYPPQGGYPP. Pro residues-rich tracts occupy residues 416 to 425 and 434 to 452; these read QGYPPPPQGY and QGYP…PQAA.

It belongs to the G-protein coupled receptor 1 family. Opsin subfamily. Post-translationally, contains one covalently linked retinal chromophore. Upon light absorption, the covalently bound 11-cis-retinal is converted to all-trans-retinal. After hydrolysis of the Schiff base and release of the covalently bound all-trans-retinal, active rhodopsin is regenerated by binding of a fresh molecule of 11-cis-retinal.

Its subcellular location is the cell projection. The protein localises to the rhabdomere membrane. Photoreceptor required for image-forming vision at low light intensity. Light-induced isomerization of 11-cis to all-trans retinal triggers a conformational change that activates signaling via G-proteins. Signaling mediates the activation of phospholipase C. Subsequent receptor phosphorylation mediates displacement of the bound G-protein alpha subunit by arrestin and terminates signaling. The sequence is that of Rhodopsin (RHO) from Sepia officinalis (Common cuttlefish).